The chain runs to 21 residues: 40 kDa major outer membrane protein (21 aa).

As to quaternary structure, disulfide bond interactions within and between MOMP molecules and other components form high molecular-weight oligomers.

Its subcellular location is the cell outer membrane. Its function is as follows. Structural rigidity of the outer membrane of elementary bodies and porin forming, permitting diffusion of solutes through the intracellular reticulate body membrane. In Actinobacillus pleuropneumoniae (Haemophilus pleuropneumoniae), this protein is 40 kDa major outer membrane protein.